Consider the following 142-residue polypeptide: Hemoglobin subunit alpha (142 aa).

The 141-residue stretch at 2–142 folds into the Globin domain; sequence VLSAADKTNV…LSTVLTSKYR (141 aa). Serine 4 carries the phosphoserine modification. N6-succinyllysine is present on lysine 8. Threonine 9 is modified (phosphothreonine). N6-succinyllysine is present on lysine 12. Lysine 17 carries the post-translational modification N6-acetyllysine; alternate. The residue at position 17 (lysine 17) is an N6-succinyllysine; alternate. Tyrosine 25 carries the phosphotyrosine modification. The residue at position 36 (serine 36) is a Phosphoserine. Lysine 41 is modified (N6-succinyllysine). Serine 50 bears the Phosphoserine mark. Glutamine 59 is an O2 binding site. Heme b is bound at residue histidine 88. Threonine 109 is subject to Phosphothreonine. Serine 125 is subject to Phosphoserine. Phosphothreonine is present on residues threonine 135 and threonine 138. A Phosphoserine modification is found at serine 139.

The protein belongs to the globin family. Heterotetramer of two alpha chains and two beta chains. In terms of tissue distribution, red blood cells.

Functionally, involved in oxygen transport from the lung to the various peripheral tissues. Hemopressin acts as an antagonist peptide of the cannabinoid receptor CNR1. Hemopressin-binding efficiently blocks cannabinoid receptor CNR1 and subsequent signaling. This chain is Hemoglobin subunit alpha (HBA), found in Monodelphis domestica (Gray short-tailed opossum).